The following is a 388-amino-acid chain: Succinate--CoA ligase [ADP-forming] subunit beta (388 aa).

Positions 9–244 constitute an ATP-grasp domain; it reads KQLFKEYGLP…PSQEDAREAH (236 aa). Residues Lys46, 53–55, Glu99, Thr102, and Glu107 each bind ATP; that span reads GRG. Asn199 and Asp213 together coordinate Mg(2+). Residues Asn264 and 321 to 323 contribute to the substrate site; that span reads GIV.

This sequence belongs to the succinate/malate CoA ligase beta subunit family. As to quaternary structure, heterotetramer of two alpha and two beta subunits. Mg(2+) serves as cofactor.

It catalyses the reaction succinate + ATP + CoA = succinyl-CoA + ADP + phosphate. The enzyme catalyses GTP + succinate + CoA = succinyl-CoA + GDP + phosphate. The protein operates within carbohydrate metabolism; tricarboxylic acid cycle; succinate from succinyl-CoA (ligase route): step 1/1. In terms of biological role, succinyl-CoA synthetase functions in the citric acid cycle (TCA), coupling the hydrolysis of succinyl-CoA to the synthesis of either ATP or GTP and thus represents the only step of substrate-level phosphorylation in the TCA. The beta subunit provides nucleotide specificity of the enzyme and binds the substrate succinate, while the binding sites for coenzyme A and phosphate are found in the alpha subunit. The protein is Succinate--CoA ligase [ADP-forming] subunit beta of Alteromonas mediterranea (strain DSM 17117 / CIP 110805 / LMG 28347 / Deep ecotype).